Consider the following 679-residue polypeptide: UvrABC system protein B (679 aa).

Positions 25 to 176 constitute a Helicase ATP-binding domain; that stretch reads YGVNQGKQYQ…NVRESLRELV (152 aa). 38–45 provides a ligand contact to ATP; it reads GATGTGKT. The Beta-hairpin motif lies at 91–114; the sequence is YYDYYQPEAYVPVSDTYIAKTSSV. The Helicase C-terminal domain maps to 429-591; that stretch reads QIDDLLDEIR…IIPKPAGKKP (163 aa). Positions 639–674 constitute a UVR domain; sequence PEIIDKLEGKMNLAAEELDFEQAAKLRDRIRQLRKK.

It belongs to the UvrB family. As to quaternary structure, forms a heterotetramer with UvrA during the search for lesions. Interacts with UvrC in an incision complex.

It is found in the cytoplasm. The UvrABC repair system catalyzes the recognition and processing of DNA lesions. A damage recognition complex composed of 2 UvrA and 2 UvrB subunits scans DNA for abnormalities. Upon binding of the UvrA(2)B(2) complex to a putative damaged site, the DNA wraps around one UvrB monomer. DNA wrap is dependent on ATP binding by UvrB and probably causes local melting of the DNA helix, facilitating insertion of UvrB beta-hairpin between the DNA strands. Then UvrB probes one DNA strand for the presence of a lesion. If a lesion is found the UvrA subunits dissociate and the UvrB-DNA preincision complex is formed. This complex is subsequently bound by UvrC and the second UvrB is released. If no lesion is found, the DNA wraps around the other UvrB subunit that will check the other stand for damage. The chain is UvrABC system protein B from Prochlorococcus marinus (strain MIT 9211).